A 513-amino-acid chain; its full sequence is GMP synthase [glutamine-hydrolyzing] (513 aa).

A Glutamine amidotransferase type-1 domain is found at 9-198 (LILVLDFGSQ…IREICKCTGE (190 aa)). Cys-86 serves as the catalytic Nucleophile. Residues His-172 and Glu-174 contribute to the active site. The GMPS ATP-PPase domain maps to 199–388 (WTMENFIEIE…LGIPEHLVWR (190 aa)). Position 226–232 (226–232 (SGGVDSS)) interacts with ATP.

As to quaternary structure, homodimer.

The enzyme catalyses XMP + L-glutamine + ATP + H2O = GMP + L-glutamate + AMP + diphosphate + 2 H(+). Its pathway is purine metabolism; GMP biosynthesis; GMP from XMP (L-Gln route): step 1/1. Its function is as follows. Catalyzes the synthesis of GMP from XMP. The chain is GMP synthase [glutamine-hydrolyzing] from Macrococcus caseolyticus (strain JCSC5402) (Macrococcoides caseolyticum).